A 459-amino-acid polypeptide reads, in one-letter code: MLKIYNSITRQKQEFKPITPGKIGMYVCGVTIYDLCHIGHGRTFVSFDMIVRYLRYAGYEVNFQRNITDVDDKIIKRANENNESCEALTERLIGEMHQDFDALNMLRPDFEPRATLHIAEIIDMVELLLARGHAYVASDGDVLFSVASYPDYGRLSGQNLDQLQAGARVEVDETKQNPMDFVLWKMSKPGEPTWESPWGPGRPGWHIECSAMNSKHLGLHFDIHGGGSDLQFPHHENEIAQSCCAHDTPYVNYWMHTGMVMVDREKMSKSLGNFFTIRDVLGHYDAETVRYFLLSGHYRSQLNYSEDNLKQARSALERLYTAIKDVDLTVAAAPAEEFVAKFKAAMDDDFNTPEAYSVLFDMVREINRLKLTDMAQASALAVTLKQLADVLGLLSQEPEAFFQGGGSDDEVAEIEALIVERNRARTEKDWAAADVARNRLNELGVELEDGPSGTTWRKK.

A Zn(2+)-binding site is contributed by Cys-28. Residues 30–40 carry the 'HIGH' region motif; sequence VTIYDLCHIGH. Positions 209, 234, and 238 each coordinate Zn(2+). The 'KMSKS' region motif lies at 266–270; sequence KMSKS. Lys-269 contacts ATP.

Belongs to the class-I aminoacyl-tRNA synthetase family. As to quaternary structure, monomer. The cofactor is Zn(2+).

It is found in the cytoplasm. The catalysed reaction is tRNA(Cys) + L-cysteine + ATP = L-cysteinyl-tRNA(Cys) + AMP + diphosphate. This is Cysteine--tRNA ligase from Shewanella baltica (strain OS185).